The chain runs to 479 residues: Membrane-bound lytic murein transglycosylase F (479 aa).

An N-terminal signal peptide occupies residues 1 to 18 (MKGLFIRIVLAICLSLWA). The segment at 19-266 (IDMVFPWQQI…RIEEKYFNHL (248 aa)) is non-LT domain. Residues 267–479 (NQFDYVDTRS…ISTQTQQEQR (213 aa)) form an LT domain region. The active site involves E311.

It in the N-terminal section; belongs to the bacterial solute-binding protein 3 family. This sequence in the C-terminal section; belongs to the transglycosylase Slt family.

The protein resides in the cell outer membrane. The enzyme catalyses Exolytic cleavage of the (1-&gt;4)-beta-glycosidic linkage between N-acetylmuramic acid (MurNAc) and N-acetylglucosamine (GlcNAc) residues in peptidoglycan, from either the reducing or the non-reducing ends of the peptidoglycan chains, with concomitant formation of a 1,6-anhydrobond in the MurNAc residue.. Its function is as follows. Murein-degrading enzyme that degrades murein glycan strands and insoluble, high-molecular weight murein sacculi, with the concomitant formation of a 1,6-anhydromuramoyl product. Lytic transglycosylases (LTs) play an integral role in the metabolism of the peptidoglycan (PG) sacculus. Their lytic action creates space within the PG sacculus to allow for its expansion as well as for the insertion of various structures such as secretion systems and flagella. The chain is Membrane-bound lytic murein transglycosylase F from Histophilus somni (strain 2336) (Haemophilus somnus).